A 451-amino-acid chain; its full sequence is Trigger factor (451 aa).

The region spanning 163–248 is the PPIase FKBP-type domain; it reads GDIIDMEYTV…IKALYANILP (86 aa).

Belongs to the FKBP-type PPIase family. Tig subfamily.

It localises to the cytoplasm. The catalysed reaction is [protein]-peptidylproline (omega=180) = [protein]-peptidylproline (omega=0). Its function is as follows. Involved in protein export. Acts as a chaperone by maintaining the newly synthesized protein in an open conformation. Functions as a peptidyl-prolyl cis-trans isomerase. This chain is Trigger factor, found in Leptospira interrogans serogroup Icterohaemorrhagiae serovar copenhageni (strain Fiocruz L1-130).